Reading from the N-terminus, the 282-residue chain is Interferon-inducible double-stranded RNA-dependent protein kinase activator A homolog (282 aa).

3 DRBM domains span residues 10–77 (TPIQ…LLKR), 99–167 (NPVG…KLQS), and 209–277 (DYIQ…YIKM).

This sequence belongs to the PRKRA family. As to quaternary structure, homodimer. Interacts with dicer1 and eif2ak2/pkr. Also able to interact with dsRNA.

The protein resides in the cytoplasm. It is found in the perinuclear region. In terms of biological role, activates eif2ak2/pkr in the absence of double-stranded RNA (dsRNA), leading to phosphorylation of eif2s1/efi2-alpha and inhibition of translation and induction of apoptosis. Required for siRNA production by dicer1 and for subsequent siRNA-mediated post-transcriptional gene silencing. Does not seem to be required for processing of pre-miRNA to miRNA by dicer1. The sequence is that of Interferon-inducible double-stranded RNA-dependent protein kinase activator A homolog (prkra) from Danio rerio (Zebrafish).